The primary structure comprises 1182 residues: IQ motif and SEC7 domain-containing protein 3 (1182 aa).

Residues 20 to 56 are a coiled coil; it reads AIVQNQQSLIHTQRERIDELERRLDELSAENRSLWEH. Disordered stretches follow at residues 62–157 and 230–275; these read AQPP…ERPP and AAGR…RQQP. Positions 63 to 78 are enriched in pro residues; that stretch reads QPPPGLVPPSSAPLPA. Low complexity-rich tracts occupy residues 79 to 105 and 254 to 263; these read APATAPAAAARAQEPLQDQGQRSAAAP and GAGAASPRAG. At Ser259 the chain carries Phosphoserine. The IQ domain maps to 315 to 344; the sequence is SRRAACTIQTAFRQYQLSKNFEKIRNSLLE. Disordered stretches follow at residues 444–479 and 521–616; these read AGPPGLEAEGRAPESAGPGPGDDAAETPGLPPAHSG and EPAA…ASAS. Basic and acidic residues predominate over residues 533 to 548; that stretch reads SGREAPEAPAVGREDA. The span at 555–569 shows a compositional bias: low complexity; that stretch reads AEAAASGAADGATAP. The span at 572–581 shows a compositional bias: acidic residues; it reads EEEEEEEETA. The segment covering 598 to 616 has biased composition (low complexity); it reads SSSSTSTKSAKSGSEASAS. One can recognise an SEC7 domain in the interval 644 to 837; it reads TLSTDTLRKR…VGIYERIQQK (194 aa). Positions 850–983 constitute a PH domain; the sequence is TKVEKSIVGM…LKESIAEVTE (134 aa). The stretch at 964–992 forms a coiled coil; sequence SDEMQKFVEDLKESIAEVTELEQIRIEWE. 2 disordered regions span residues 1002 to 1090 and 1121 to 1182; these read LSFK…PGTL and YTSS…RSLV. Positions 1022–1033 are enriched in basic and acidic residues; it reads AKREAALRERPA. A compositionally biased stretch (polar residues) spans 1043–1052; the sequence is NRLQTSQHNS. The segment covering 1061 to 1087 has biased composition (pro residues); the sequence is PVPPPDLQPSPPRQQTPPLPPPPPTPP. Residues 1121–1132 show a composition bias toward low complexity; the sequence is YTSSSSDSCGST. The span at 1147 to 1157 shows a compositional bias: pro residues; it reads PPLPPPPPPYN.

This sequence belongs to the BRAG family. In terms of assembly, interacts with DLG1 and DLG4. Interacts with GPHN. Expressed specifically in the adult brain, predominantly in the cerebral cortex and the olfactory bulb, but not in the fetal brain. Expressed only in mature neurons, but not in undifferentiated neural stem precursor cells (NSPCs), nor in glioma cells.

It is found in the cytoplasm. The protein localises to the postsynaptic density. Acts as a guanine nucleotide exchange factor (GEF) for ARF1. The protein is IQ motif and SEC7 domain-containing protein 3 (IQSEC3) of Homo sapiens (Human).